A 225-amino-acid polypeptide reads, in one-letter code: Guanylate kinase (225 aa).

The Guanylate kinase-like domain occupies 20–198 (GNLFMVVAPS…ALSELQCLVA (179 aa)). ATP is bound at residue 27 to 34 (APSGAGKS).

Belongs to the guanylate kinase family.

The protein resides in the cytoplasm. It catalyses the reaction GMP + ATP = GDP + ADP. Its function is as follows. Essential for recycling GMP and indirectly, cGMP. In Paraburkholderia xenovorans (strain LB400), this protein is Guanylate kinase.